We begin with the raw amino-acid sequence, 568 residues long: DNA mismatch repair protein MutL (568 aa).

Belongs to the DNA mismatch repair MutL/HexB family.

This protein is involved in the repair of mismatches in DNA. It is required for dam-dependent methyl-directed DNA mismatch repair. May act as a 'molecular matchmaker', a protein that promotes the formation of a stable complex between two or more DNA-binding proteins in an ATP-dependent manner without itself being part of a final effector complex. This is DNA mismatch repair protein MutL from Nostoc punctiforme (strain ATCC 29133 / PCC 73102).